An 801-amino-acid chain; its full sequence is Bromodomain-containing protein 2 (801 aa).

N-acetylmethionine is present on M1. Phosphothreonine is present on T6. S37 is modified (phosphoserine). Residues 53-73 form a disordered region; it reads ALQLTPANPPPPEVSNPKKPG. In terms of domain architecture, Bromo 1 spans 74–180; the sequence is RVTNQLQYLH…KIFLQKVASM (107 aa). Residues D112, Y155, N156, K157, D160, and D161 each coordinate a protein. 3 disordered regions span residues 268–349, 456–647, and 737–801; these read PPAQ…LSEQ, EPLE…YDEK, and EKRL…SDSG. Low complexity predominate over residues 285-298; sequence TTTPTPTAILAPGS. A phosphoserine mark is found at S298, S301, and S305. A compositionally biased stretch (basic and acidic residues) spans 316 to 332; it reads MRRESGRPIKPPRKDLP. The region spanning 344-453 is the Bromo 2 domain; it reads GKLSEQLKHC…DVFEFRYAKM (110 aa). The segment covering 481-514 has biased composition (acidic residues); the sequence is SSEESSSESSSEEEEEEDEEDEEEEESESSDSEE. Residues 544–566 show a composition bias toward basic residues; sequence KPKRKREKKEKKKKRKAEKHRGR. The short motif at 555–559 is the Nuclear localization signal element; it reads KKKRK. Positions 592–612 are enriched in gly residues; the sequence is GSGGGSAALGPSGFGPSGGSG. The region spanning 632-714 is the NET domain; it reads DSEEEEESRP…SCLRKKPRKP (83 aa). S633 is modified (phosphoserine). A compositionally biased stretch (low complexity) spans 763–795; it reads SSSAQQVAVSRLSASSSSSDSSSSSSSSSSSDT.

The protein belongs to the BET family. Homodimer. Interacts with E2F1. Interacts with (acetylated) STAT3; promoting STAT3 recruitment to chromatin. Interacts with CTCF; promoting BRD2 recruitment to chromatin. In terms of assembly, (Microbial infection) Interacts with herpes virus 8 protein LANA1.

Its subcellular location is the nucleus. The protein resides in the chromosome. Its activity is regulated as follows. Inhibited by JQ1, a thieno-triazolo-1,4-diazepine derivative, which specifically inhibits members of the BET family (BRD2, BRD3 and BRD4). The first bromo domain is inhibited by GSK778 (iBET-BD1), which specifically inhibits the first bromo domain of members of the BET family (BRD2, BRD3 and BRD4). The second bromo domain is inhibited by ABBV-744, which specifically inhibits the second bromo domain of members of the BET family (BRD2, BRD3 and BRD4). The second bromo domain is inhibited by GSK046 (iBET-BD2), which specifically inhibits the second bromo domain of members of the BET family (BRD2, BRD3 and BRD4). Functionally, chromatin reader protein that specifically recognizes and binds histone H4 acetylated at 'Lys-5' and 'Lys-12' (H4K5ac and H4K12ac, respectively), thereby controlling gene expression and remodeling chromatin structures. Recruits transcription factors and coactivators to target gene sites, and activates RNA polymerase II machinery for transcriptional elongation. Plays a key role in genome compartmentalization via its association with CTCF and cohesin: recruited to chromatin by CTCF and promotes formation of topologically associating domains (TADs) via its ability to bind acetylated histones, contributing to CTCF boundary formation and enhancer insulation. Also recognizes and binds acetylated non-histone proteins, such as STAT3. Involved in inflammatory response by regulating differentiation of naive CD4(+) T-cells into T-helper Th17: recognizes and binds STAT3 acetylated at 'Lys-87', promoting STAT3 recruitment to chromatin. In addition to acetylated lysines, also recognizes and binds lysine residues on histones that are both methylated and acetylated on the same side chain to form N6-acetyl-N6-methyllysine (Kacme), an epigenetic mark of active chromatin associated with increased transcriptional initiation. Specifically binds histone H4 acetyl-methylated at 'Lys-5' and 'Lys-12' (H4K5acme and H4K12acme, respectively). The chain is Bromodomain-containing protein 2 from Homo sapiens (Human).